We begin with the raw amino-acid sequence, 459 residues long: Probable PTS system sucrose-specific EIIBC component (459 aa).

Residues 1–86 form the PTS EIIB type-1 domain; the sequence is MHKEIAKELL…VHVWETAPSE (86 aa). Cysteine 25 acts as the Phosphocysteine intermediate; for EIIB activity in catalysis. The region spanning 106-459 is the PTS EIIC type-1 domain; sequence KTLSDIFVPI…LFLGFKEETE (354 aa). Helical transmembrane passes span 111 to 131, 147 to 167, 177 to 197, 209 to 229, 245 to 265, 288 to 308, 329 to 349, 360 to 380, 388 to 408, 412 to 432, and 434 to 454; these read IFVP…LIGM, MLDL…GFSA, LGAV…SMLG, LHIP…SVFV, LDVV…ALIV, AGIA…LSGL, FLVP…LAVF, IALP…VFGV, FIGA…VQVV, YGLT…ANFV, and YMIG…FLGF.

It is found in the cell membrane. Its function is as follows. The phosphoenolpyruvate-dependent sugar phosphotransferase system (sugar PTS), a major carbohydrate active -transport system, catalyzes the phosphorylation of incoming sugar substrates concomitantly with their translocation across the cell membrane. This system may be involved in sucrose transport. The EIIB domain is mainly phosphorylated by the EIIA domains of GamP and PtsA/YpqE. Negatively regulates SacY activity by catalyzing its phosphorylation on 'His-99'. This is Probable PTS system sucrose-specific EIIBC component (sacX) from Bacillus subtilis (strain 168).